The primary structure comprises 107 residues: NADH dehydrogenase [ubiquinone] 1 beta subcomplex subunit 10-A (107 aa).

A disordered region spans residues 1–23 (MGRKKGLPEFEESAPDGFDPENP).

It belongs to the complex I NDUFB10 subunit family. As to quaternary structure, complex I is composed of at least 49 different subunits.

The protein localises to the mitochondrion inner membrane. Its function is as follows. Accessory subunit of the mitochondrial membrane respiratory chain NADH dehydrogenase (Complex I), that is believed not to be involved in catalysis. Complex I functions in the transfer of electrons from NADH to the respiratory chain. The immediate electron acceptor for the enzyme is believed to be ubiquinone. The chain is NADH dehydrogenase [ubiquinone] 1 beta subcomplex subunit 10-A from Arabidopsis thaliana (Mouse-ear cress).